The chain runs to 280 residues: Type 1 encapsulin shell protein (280 aa).

The protein belongs to the encapsulin family. Family 1 subfamily. This encapsulin nanocompartment is formed by 60 subunits; monomers form pentamers which assemble to form shells. There are 12 pores where the pentamers meet as well as 3-fold axis channels and dimer channels; none are larger than 3-4 Angstroms in diameter. The N-terminus of the protein is inside the shell, the C-terminus is outside.

The protein resides in the encapsulin nanocompartment. In terms of biological role, shell component of a type 1 encapsulin nanocompartment. Assembles into proteinaceous icosahedral shells 24 nm in diameter in the presence and absence of its ferritin cargo protein. The center of cargo-loaded nanocompartments is loaded with iron. The empty encapsulin nanocompartment sequesters about 2200 Fe ions while the cargo-loaded nanocompartment can maximally sequester about 4150 Fe ions. Does not have any detectable ferroxidase activity. This chain is Type 1 encapsulin shell protein, found in Rhodospirillum rubrum (strain ATCC 11170 / ATH 1.1.1 / DSM 467 / LMG 4362 / NCIMB 8255 / S1).